Reading from the N-terminus, the 2496-residue chain is Hornerin (2496 aa).

The tract at residues 1 to 81 (MPKLLESIVT…TEYLLMILKL (81 aa)) is S-100-like. EF-hand domains lie at 13–48 (DVFYQYATEYGNCDMLSKEEMKELLVTEFHQILKNP) and 49–84 (DDPDTVDIIMQNLDRDHNHKVDFTEYLLMILKLTKA). Positions 27, 32, 62, 64, 66, 68, and 73 each coordinate Ca(2+). The segment at 82–98 (TKACNKIIGKDYCQASG) is s (spacer). A disordered region spans residues 97-2496 (SGSKQKNHSH…SGQTSGCGSG (2400 aa)). Residues 99–145 (SKQKNHSHQHQEEQSKKETENKEQKGSISSSAGENDSYSRGSRGSNK) form a 1; truncated repeat. Over residues 107–123 (QHQEEQSKKETENKEQK) the composition is skewed to basic and acidic residues. Positions 124 to 134 (GSISSSAGEND) are enriched in polar residues. Residues 144-153 (NKSKSKKLRK) show a composition bias toward basic residues. A run of 27 repeats spans residues 146 to 231 (SKSK…NGKH), 232 to 321 (GSSS…FGSS), 326 to 400 (SGQS…SEQY), 401 to 491 (GASS…SCCG), 492 to 577 (QSSG…SGRY), 578 to 668 (GASS…SGSR), 669 to 748 (HGSG…SGRC), 749 to 839 (GASS…SCCG), 840 to 926 (QSSG…SGRY), 927 to 1017 (GASS…SGSR), 1018 to 1097 (HGSG…SGRC), 1098 to 1188 (GASS…SCCG), 1189 to 1274 (QSSG…SGRY), 1275 to 1365 (GASS…SGSR), 1366 to 1445 (HGSG…SGRC), 1446 to 1536 (GASS…SCCG), 1537 to 1622 (QSSG…SGRY), 1623 to 1713 (GASS…SGSR), 1714 to 1793 (HGSG…SGRC), 1794 to 1884 (GASS…SCCG), 1885 to 1970 (QSSG…SGRY), 1971 to 2061 (GASS…SGSR), 2062 to 2141 (HGSG…SGRC), 2142 to 2232 (GASS…SGSR), 2233 to 2312 (HGSG…SGRY), 2313 to 2403 (GASS…SGSR), and 2410 to 2496 (QFPI…CGSG). Composition is skewed to low complexity over residues 183 to 194 (SGFSNSSGNGRP), 200 to 246 (SGFP…SGHS), and 270 to 286 (RESSGSQEYSSGSSEEP). Polar residues-rich tracts occupy residues 294-319 (RKNSSTCGKNGSYSGQSTGRHQQGFG) and 326-355 (SGQSITSANHGSHSNQSSCSGTRECGSSES). 3 stretches are compositionally biased toward low complexity: residues 362–379 (VSGSGHSSSTGKYTSTSG), 394–415 (SSGSEQYGASSGQSSGCSSGQS), and 423–448 (SGSRNSSTQSRGRSTSRESSTSQQFG). Residues 449–464 (SGSGRSSGFSQGGSGQ) are compositionally biased toward gly residues. The segment covering 465–565 (GRSSRGGQQG…GQTSSSTRQG (101 aa)) has biased composition (low complexity). Phosphoserine is present on residues serine 506 and serine 508. Gly residues predominate over residues 566–576 (SGQGQASGSGR). 2 stretches are compositionally biased toward low complexity: residues 577–593 (YGASSGQTSGCGSGQST) and 600–625 (SGSRNSSTQSRGRSTSRESSTSQRYG). Residues 626-641 (SGSGESSGFSQGGSGQ) show a composition bias toward gly residues. Low complexity-rich tracts occupy residues 642 to 670 (GRSSRGGQQGSFSGQTSGRSQHQSGSRHG) and 679 to 713 (SGQQGSHHGHSSSSGTHNSGSSQSSSTQWSHGSGS). Arginine 646 bears the Omega-N-methylarginine mark. Position 716 is a phosphoserine (serine 716). Residues 723–736 (GSTSGQTASSTRQG) are compositionally biased toward low complexity. The span at 737-747 (SGQGQASGSGR) shows a compositional bias: gly residues. 4 stretches are compositionally biased toward low complexity: residues 748–764 (CGASSGQTSGCGSGQST), 771–796 (SGSRNSSTQSRGRSTSRESSTSQRFG), 804–884 (GFSQ…SRPA), and 891–914 (SGRSSGLGQYGSPSGQTSSSTRQG). Position 815 is a phosphoserine (serine 815). Gly residues predominate over residues 915–925 (SGQGQASGSGR). Composition is skewed to low complexity over residues 926–942 (YGASSGQTSGCGSGQST) and 949–974 (SGSRNSSTQSRGRSTSRESSTSQRYG). A compositionally biased stretch (gly residues) spans 975 to 990 (SGSGESSGFSQGGSGQ). Low complexity-rich tracts occupy residues 991 to 1019 (GRSSRGGQQGSFSGQTSGRSQHQSGSRHG), 1028 to 1062 (SGQQGSHHGHSSSSGTHNSGSSQSSSTQWSHGSGS), and 1072 to 1085 (GSTSGQTASSTRQG). At arginine 995 the chain carries Omega-N-methylarginine. Gly residues predominate over residues 1086–1096 (SGQGQASGSGR). Low complexity-rich tracts occupy residues 1097–1113 (CGASSGQTSGCGSGQST), 1120–1145 (SGSRNSSTQSRGRSTSRESSTSQRFG), and 1153–1262 (GFSQ…TRQG). Serine 1229 is subject to Phosphoserine. Gly residues predominate over residues 1263–1273 (SGQGQASGSGR). A compositionally biased stretch (polar residues) spans 1281–1292 (TSGCRSGQSTRY). The segment covering 1298 to 1322 (GSRNSSTQSRGRSTSRESSTSQRYG) has biased composition (low complexity). Residues 1323 to 1338 (SGSGESSGFSQGGSGQ) are compositionally biased toward gly residues. 3 stretches are compositionally biased toward low complexity: residues 1339 to 1367 (GRSSRGGQQGSFSGQTSGRNQHQSGSRHG), 1376 to 1410 (SGQQGSHHGHSSSSGTHNSGSSQSSSTQWSHGSGS), and 1420 to 1433 (GSTSGQTASSTRQG). Omega-N-methylarginine is present on arginine 1343. Positions 1434 to 1444 (SGQGQASGSGR) are enriched in gly residues. Composition is skewed to low complexity over residues 1445–1461 (CGASSGQTSGCGSGQST), 1468–1493 (SGSRNSSTQSRGRSTSRESSTSQRFG), and 1501–1610 (GFSQ…TRQG). Serine 1551 and serine 1553 each carry phosphoserine. Gly residues predominate over residues 1611 to 1621 (SGQGQASGSGR). Composition is skewed to low complexity over residues 1622–1631 (YGASSGQTSG) and 1645–1670 (SGSRNSSTQSRGRSTSRESSTSQRCG). Residue serine 1650 is modified to Phosphoserine. Positions 1671–1686 (SGSGESSGFSQGGSGQ) are enriched in gly residues. Low complexity-rich tracts occupy residues 1687-1715 (GRSSRGGQQGSFSGQTSGRSQHQSGSRHG), 1724-1758 (SGQQGSHHGHSSSSGTHNSGSSQSSSTQWSHGSGS), and 1768-1781 (GSTSGQTASSTRQG). An Omega-N-methylarginine modification is found at arginine 1691. A compositionally biased stretch (gly residues) spans 1782–1792 (SGQGQASGSGR). Residues 1800–1811 (TSGCGSDQSTRY) are compositionally biased toward polar residues. 2 stretches are compositionally biased toward low complexity: residues 1816–1841 (SGSRNSSTQSRGRSTSRESSTSQRFG) and 1849–1958 (GFSQ…TRQG). A compositionally biased stretch (gly residues) spans 1959–1969 (SGQGQASGSGR). Low complexity-rich tracts occupy residues 1970–1986 (YGASSGQTSGCGSGQST) and 1993–2018 (SGSRNSSTQSRGRSTSRESSTSQRYG). Serine 2011 carries the post-translational modification Phosphoserine. Residues 2019-2034 (SGSGESSGFSQGGSGQ) show a composition bias toward gly residues. Composition is skewed to low complexity over residues 2035–2063 (GRSSRGGQQGSFSGQTSGRSQHQSGSRHG) and 2072–2106 (SGQQGSHHGHSSSSGTHNSGSSQSSSTQWSHGSGS). An Omega-N-methylarginine modification is found at arginine 2039. Phosphoserine occurs at positions 2109 and 2124. A compositionally biased stretch (low complexity) spans 2116-2129 (GSTSGQTASSTRQG). Over residues 2130 to 2140 (SGQGQASGSGR) the composition is skewed to gly residues. 2 stretches are compositionally biased toward low complexity: residues 2141–2157 (CGASSGQTSGCGSGQST) and 2164–2189 (SGSRNSSTQSRGRSTSRESSTSQRYG). Residues 2190–2205 (SGSGESSGFSQGGSGQ) show a composition bias toward gly residues. Composition is skewed to low complexity over residues 2206–2234 (GRSSRGGQQGSFSGQTSGRSQHQSGSRHG) and 2243–2300 (SGQQ…TRQG). Arginine 2210 bears the Omega-N-methylarginine mark. A compositionally biased stretch (gly residues) spans 2301-2311 (SGQGQASGSGR). Composition is skewed to low complexity over residues 2312-2328 (YGASSGQTSGCGSGQST) and 2335-2360 (SGSRNSSTQSRGRSTSRESSTSQRYG). Serine 2353 is modified (phosphoserine). A compositionally biased stretch (gly residues) spans 2361–2376 (SGSGESSGFSQGGSGQ). Composition is skewed to low complexity over residues 2377 to 2405 (GRSSRGGQQGSFSGQTSGRSQHQSGSRHG), 2414 to 2448 (SGQQGSHHGHSSSSGTHNSGSSQSSSTQWSHGSGS), and 2458 to 2471 (GSTSGQTASSTRQG). Arginine 2381 carries the post-translational modification Omega-N-methylarginine. The segment covering 2472 to 2482 (SGQGQASGSGR) has biased composition (gly residues).

This sequence belongs to the S100-fused protein family. In the N-terminal section; belongs to the S-100 family. In terms of processing, processed during the process of epidermal differentiation. Post-translationally, forms covalent cross-links mediated by transglutaminase TGM3, between glutamine and the epsilon-amino group of lysine residues (in vitro). Embryonic skin. Highest level in the adult forestomach followed by the skin. Lower levels in the tongue, esophagus. Detected in the granular and cornified layers of the mature epidermis.

The protein resides in the cytoplasmic granule. Component of the epidermal cornified cell envelopes. This is Hornerin (Hrnr) from Mus musculus (Mouse).